A 98-amino-acid chain; its full sequence is NADH-ubiquinone oxidoreductase chain 4L (98 aa).

The next 3 membrane-spanning stretches (helical) occupy residues Met1–Met21, Ala29–Leu49, and Ile61–Val81.

The protein belongs to the complex I subunit 4L family. Core subunit of respiratory chain NADH dehydrogenase (Complex I) which is composed of 45 different subunits.

The protein resides in the mitochondrion inner membrane. It carries out the reaction a ubiquinone + NADH + 5 H(+)(in) = a ubiquinol + NAD(+) + 4 H(+)(out). In terms of biological role, core subunit of the mitochondrial membrane respiratory chain NADH dehydrogenase (Complex I) which catalyzes electron transfer from NADH through the respiratory chain, using ubiquinone as an electron acceptor. Part of the enzyme membrane arm which is embedded in the lipid bilayer and involved in proton translocation. This chain is NADH-ubiquinone oxidoreductase chain 4L (MT-ND4L), found in Lagenorhynchus albirostris (White-beaked dolphin).